Here is a 132-residue protein sequence, read N- to C-terminus: Large ribosomal subunit protein bL19 (132 aa).

This sequence belongs to the bacterial ribosomal protein bL19 family.

Its function is as follows. This protein is located at the 30S-50S ribosomal subunit interface and may play a role in the structure and function of the aminoacyl-tRNA binding site. The protein is Large ribosomal subunit protein bL19 of Methylobacterium radiotolerans (strain ATCC 27329 / DSM 1819 / JCM 2831 / NBRC 15690 / NCIMB 10815 / 0-1).